A 492-amino-acid polypeptide reads, in one-letter code: 3-octaprenyl-4-hydroxybenzoate carboxy-lyase (492 aa).

A Mn(2+)-binding site is contributed by Asn-177. Prenylated FMN is bound by residues 180 to 182, 194 to 196, and 199 to 200; these read IYR, RWL, and RG. Glu-243 lines the Mn(2+) pocket. Asp-292 (proton donor) is an active-site residue.

Belongs to the UbiD family. As to quaternary structure, homohexamer. The cofactor is prenylated FMN. Requires Mn(2+) as cofactor.

The protein resides in the cell membrane. The catalysed reaction is a 4-hydroxy-3-(all-trans-polyprenyl)benzoate + H(+) = a 2-(all-trans-polyprenyl)phenol + CO2. Its pathway is cofactor biosynthesis; ubiquinone biosynthesis. In terms of biological role, catalyzes the decarboxylation of 3-octaprenyl-4-hydroxy benzoate to 2-octaprenylphenol, an intermediate step in ubiquinone biosynthesis. The chain is 3-octaprenyl-4-hydroxybenzoate carboxy-lyase from Neisseria gonorrhoeae (strain ATCC 700825 / FA 1090).